The primary structure comprises 207 residues: ATP synthase subunit b 2 (207 aa).

A helical transmembrane segment spans residues 53–72 (TYASQLLWLVITFSVFYLLM).

Belongs to the ATPase B chain family. As to quaternary structure, F-type ATPases have 2 components, F(1) - the catalytic core - and F(0) - the membrane proton channel. F(1) has five subunits: alpha(3), beta(3), gamma(1), delta(1), epsilon(1). F(0) has three main subunits: a(1), b(2) and c(10-14). The alpha and beta chains form an alternating ring which encloses part of the gamma chain. F(1) is attached to F(0) by a central stalk formed by the gamma and epsilon chains, while a peripheral stalk is formed by the delta and b chains.

It localises to the cell inner membrane. F(1)F(0) ATP synthase produces ATP from ADP in the presence of a proton or sodium gradient. F-type ATPases consist of two structural domains, F(1) containing the extramembraneous catalytic core and F(0) containing the membrane proton channel, linked together by a central stalk and a peripheral stalk. During catalysis, ATP synthesis in the catalytic domain of F(1) is coupled via a rotary mechanism of the central stalk subunits to proton translocation. Functionally, component of the F(0) channel, it forms part of the peripheral stalk, linking F(1) to F(0). The b'-subunit is a diverged and duplicated form of b found in plants and photosynthetic bacteria. The protein is ATP synthase subunit b 2 (atpF2) of Rhizobium etli (strain CIAT 652).